A 107-amino-acid polypeptide reads, in one-letter code: Putative double-stranded DNA mimic protein YpsIP31758_1954 (107 aa).

It belongs to the putative dsDNA mimic protein family.

Its function is as follows. May act as a double-stranded DNA (dsDNA) mimic. Probably regulates the activity of a dsDNA-binding protein. This chain is Putative double-stranded DNA mimic protein YpsIP31758_1954, found in Yersinia pseudotuberculosis serotype O:1b (strain IP 31758).